The primary structure comprises 166 residues: NAD(P)H-quinone oxidoreductase subunit I, chloroplastic (166 aa).

2 4Fe-4S ferredoxin-type domains span residues 55-84 (GRIHFEFDKCIACEVCVRVCPIDLPVVDWK) and 95-124 (LNYSIDFGICIFCGNCVEYCPTNCLSMTEE). Positions 64, 67, 70, 74, 104, 107, 110, and 114 each coordinate [4Fe-4S] cluster.

The protein belongs to the complex I 23 kDa subunit family. In terms of assembly, NDH is composed of at least 16 different subunits, 5 of which are encoded in the nucleus. [4Fe-4S] cluster is required as a cofactor.

Its subcellular location is the plastid. It localises to the chloroplast thylakoid membrane. The enzyme catalyses a plastoquinone + NADH + (n+1) H(+)(in) = a plastoquinol + NAD(+) + n H(+)(out). It carries out the reaction a plastoquinone + NADPH + (n+1) H(+)(in) = a plastoquinol + NADP(+) + n H(+)(out). NDH shuttles electrons from NAD(P)H:plastoquinone, via FMN and iron-sulfur (Fe-S) centers, to quinones in the photosynthetic chain and possibly in a chloroplast respiratory chain. The immediate electron acceptor for the enzyme in this species is believed to be plastoquinone. Couples the redox reaction to proton translocation, and thus conserves the redox energy in a proton gradient. This Picradeniopsis absinthifolia (Hairyseed bahia) protein is NAD(P)H-quinone oxidoreductase subunit I, chloroplastic.